Here is an 801-residue protein sequence, read N- to C-terminus: Phenylalanine--tRNA ligase beta subunit (801 aa).

The region spanning 39–154 (LKMPQKVVVG…GHLELGVELG (116 aa)) is the tRNA-binding domain. One can recognise a B5 domain in the interval 398 to 475 (IDEITIKTTF…RIYGIDNVSS (78 aa)). Residues Asp453, Asp459, Glu462, and Glu463 each coordinate Mg(2+). Residues 708-800 (SKYQKSTRDL…LVREFDAVLR (93 aa)) enclose the FDX-ACB domain.

Belongs to the phenylalanyl-tRNA synthetase beta subunit family. Type 1 subfamily. Tetramer of two alpha and two beta subunits. Mg(2+) is required as a cofactor.

The protein resides in the cytoplasm. It carries out the reaction tRNA(Phe) + L-phenylalanine + ATP = L-phenylalanyl-tRNA(Phe) + AMP + diphosphate + H(+). The chain is Phenylalanine--tRNA ligase beta subunit from Helicobacter hepaticus (strain ATCC 51449 / 3B1).